Here is a 354-residue protein sequence, read N- to C-terminus: Vascular endothelial growth factor D (354 aa).

Residues 1–21 (MYREWVVVNVFMMLYVQLVQG) form the signal peptide. The propeptide at 22–88 (SSNEHGPVKR…SRSASHRSTR (67 aa)) is or 99 (in a minor form). 3 disulfides stabilise this stretch: Cys111–Cys153, Cys142–Cys189, and Cys146–Cys191. N-linked (GlcNAc...) asparagine glycans are attached at residues Asn155 and Asn185. Positions 206 to 354 (SIQIPEEDRC…AQGPHSRKNP (149 aa)) are excised as a propeptide. One copy of the 1; approximate repeat lies at 222-237 (CPIDMLWDSNKCKCVL). Positions 222 to 318 (CPIDMLWDSN…PDTCSCEDRC (97 aa)) are 4 X 16 AA repeats of C-X(10)-C-X-C-X(1,3)-C. Repeat copies occupy residues 258-273 (CGPH…ECVC), 277-293 (CPKD…CFEC), and 301-318 (CQKH…EDRC). An N-linked (GlcNAc...) asparagine glycan is attached at Asn287.

The protein belongs to the PDGF/VEGF growth factor family. As to quaternary structure, homodimer; non-covalent and antiparallel. Post-translationally, undergoes a complex proteolytic maturation which generates a variety of processed secreted forms with increased activity toward VEGFR-3 and VEGFR-2. VEGF-D first form an antiparallel homodimer linked by disulfide bonds before secretion. The fully processed VEGF-D is composed mostly of two VEGF homology domains (VHDs) bound by non-covalent interactions. In terms of tissue distribution, highly expressed in lung, heart, small intestine and fetal lung, and at lower levels in skeletal muscle, colon, and pancreas.

The protein resides in the secreted. Functionally, growth factor active in angiogenesis, lymphangiogenesis and endothelial cell growth, stimulating their proliferation and migration and also has effects on the permeability of blood vessels. May function in the formation of the venous and lymphatic vascular systems during embryogenesis, and also in the maintenance of differentiated lymphatic endothelium in adults. Binds and activates VEGFR-2 (KDR/FLK1) and VEGFR-3 (FLT4) receptors. This is Vascular endothelial growth factor D from Homo sapiens (Human).